The primary structure comprises 187 residues: Elongation factor P (187 aa).

This sequence belongs to the elongation factor P family.

The protein localises to the cytoplasm. Its pathway is protein biosynthesis; polypeptide chain elongation. Its function is as follows. Involved in peptide bond synthesis. Stimulates efficient translation and peptide-bond synthesis on native or reconstituted 70S ribosomes in vitro. Probably functions indirectly by altering the affinity of the ribosome for aminoacyl-tRNA, thus increasing their reactivity as acceptors for peptidyl transferase. This Parafrankia sp. (strain EAN1pec) protein is Elongation factor P.